The primary structure comprises 253 residues: uncharacterized protein (253 aa).

N-acetylalanine is present on alanine 2.

Belongs to the NAD(P)-dependent epimerase/dehydratase family. As to quaternary structure, homodimer.

This is an uncharacterized protein from Arabidopsis thaliana (Mouse-ear cress).